The sequence spans 595 residues: TNF receptor-associated factor family protein DDB_G0272348 (595 aa).

Residues 14-64 (SFTNNNSNNNNNNNNNSNSNNNNNNNNNNINNNNNHNNNNKNNSNNKNEIN) form a disordered region. Over residues 17 to 64 (NNNSNNNNNNNNNSNSNNNNNNNNNNINNNNNHNNNNKNNSNNKNEIN) the composition is skewed to low complexity. Residues 87–134 (CTICSDLLVNSFHADKFKAVQCKNGHYTTCLNCWEKHLEKKKNCIQCG) form an RING-type; degenerate zinc finger. 2 consecutive TRAF-type zinc fingers follow at residues 189–253 (EHLK…INKE) and 254–311 (SHNA…SKLS). Residues 348–410 (LLNGQNKKIT…QQQQSQQQQQ (63 aa)) adopt a coiled-coil conformation. Low complexity predominate over residues 409–440 (QQSQQQQQSQQSQQNNNSNSHFINNNNNNINN). Residues 409–450 (QQSQQQQQSQQSQQNNNSNSHFINNNNNNINNVQMSDSPNGG) are disordered. The segment covering 441-450 (VQMSDSPNGG) has biased composition (polar residues). The 129-residue stretch at 456-584 (VYKNKWVISN…NDSITIEIEI (129 aa)) folds into the MATH domain.

This sequence belongs to the TNF receptor-associated factor family. A subfamily.

The protein localises to the cytoplasm. Probable adapter protein and signal transducer that links members of the tumor necrosis factor receptor family to different signaling pathways by association with the receptor cytoplasmic domain and kinases. The polypeptide is TNF receptor-associated factor family protein DDB_G0272348 (Dictyostelium discoideum (Social amoeba)).